Reading from the N-terminus, the 296-residue chain is MHPRFENAFRQLPASLQAALRPLIDKPDFAAMLTADDVNAVCEASQLDADALAFALLPLAAACAQAPISNFQVGAIAQGLSGNFYFGANMEFSAVQLQQTVHAEQSAVSHAWMRNERGLRAVTVNYTPCGHCRQFMNELRDAASLRIQLPGRQPATLSHYLPDSFGPVDLQIDTLLMDDINHGATLQNMNALARQALDAANRSHAPYSKAISGIVLETSSGNTYTGRYAENAAFNPSLPPLQTALNLMNLAGEDLSTVKHAVVVERRNAVVSHWAISQIMLAELGCTDVEHHFIEE.

2 CMP/dCMP-type deaminase domains span residues 48-168 (DADA…FGPV) and 187-296 (QNMN…FIEE). 89 to 91 (NME) provides a ligand contact to substrate. His-102 serves as a coordination point for Zn(2+). Glu-104 (proton donor) is an active-site residue. The Zn(2+) site is built by Cys-129 and Cys-132.

Belongs to the cytidine and deoxycytidylate deaminase family. Homodimer. Requires Zn(2+) as cofactor.

It catalyses the reaction cytidine + H2O + H(+) = uridine + NH4(+). The enzyme catalyses 2'-deoxycytidine + H2O + H(+) = 2'-deoxyuridine + NH4(+). In terms of biological role, this enzyme scavenges exogenous and endogenous cytidine and 2'-deoxycytidine for UMP synthesis. This chain is Cytidine deaminase, found in Pectobacterium carotovorum subsp. carotovorum (strain PC1).